The sequence spans 541 residues: MYDNMSTMVYIKEEKLENVTQDEIISKTKQVIQGLEALKNEHNSILQSLLETLKCLKKDDESNLVEEKSSMIRKSLEMLELGLSEAQVMMALSNHLNAVESEKQNVRAQVRRLCQENQWLRDELANTQQKLQKSEQSVAQLEEEKKHLEFMNQLKKYDDDISPSEDKDSDSSKEPLDDLFPNDEDEPGQGIQHSDSSAAAARQGYEIPARLRTLHNLVIQYASQGRYEVAVPSCKQALEDLEKTSGHDHPDVATMLNILALVYRDQNKYKDAANLLNDALAIREKTLGRDHPAVAATLNNLAVLYGKRGKYKEAEPLCKRALEIREKVLGKDHPDVAKQLNNLALLCQNQGKYEEVEYYYQRALGIYQTKLGPDRTPNVAKTKNNLASCYLKQGKFKQAETLYKEILTRAHEAEFGSVDDENKPIWMHAEEREECKGKQKDGSAFGEYGGWYKACKVDSPTVTTTLKNLGALYRRQGKFEAAETLEEAAMRSRKQGLDNVHKQRVAEVLNDPESMEKRRSRESLNMDVVKYESGPDGGEEA.

Positions 27–156 (KTKQVIQGLE…HLEFMNQLKK (130 aa)) form a coiled coil. Basic and acidic residues predominate over residues 156–176 (KYDDDISPSEDKDSDSSKEPL). The tract at residues 156–201 (KYDDDISPSEDKDSDSSKEPLDDLFPNDEDEPGQGIQHSDSSAAAA) is disordered. Serine 162 is modified (phosphoserine). 5 TPR repeats span residues 211–244 (LRTL…LEKT), 253–286 (ATML…REKT), 295–328 (AATL…REKV), 337–370 (AKQL…YQTK), and 380–413 (AKTK…AHEA). At tyrosine 448 the chain carries Phosphotyrosine. Position 459 is a phosphoserine (serine 459). The TPR 6 repeat unit spans residues 463 to 496 (TTTLKNLGALYRRQGKFEAAETLEEAAMRSRKQG). The segment at 493-541 (RKQGLDNVHKQRVAEVLNDPESMEKRRSRESLNMDVVKYESGPDGGEEA) is disordered. 2 stretches are compositionally biased toward basic and acidic residues: residues 495 to 505 (QGLDNVHKQRV) and 514 to 524 (SMEKRRSRESL). Residues serine 520 and serine 523 each carry the phosphoserine; by AMPK modification.

Belongs to the kinesin light chain family. As to quaternary structure, oligomeric complex composed of two heavy chains and two light chains. Interacts with SPAG9. Interacts with ATCAY; may link mitochondria to KLC1 and regulate mitochondria localization into neuron projections. Interacts (via TPR repeats) with TOR1A; the interaction associates TOR1A with the kinesin oligomeric complex. Interacts with BORCS5. Interacts with MAPK8IP3/JIP3 and NTRK2/TRKB; interaction with NTRK2/TRKB is mediated by MAPK8IP3/JIP3. Interacts with CLSTN1; phosphorylation at Ser-459 inhibits interaction with CLSTN1. Phosphorylation at Ser-459 by ERK inhibits interaction with CLSTN1 and localization to cytoplasmic vesicles.

Its subcellular location is the cell projection. It localises to the growth cone. The protein localises to the cytoplasmic vesicle. The protein resides in the cytoplasm. It is found in the cytoskeleton. In terms of biological role, kinesin is a microtubule-associated force-producing protein that may play a role in organelle transport. The light chain may function in coupling of cargo to the heavy chain or in the modulation of its ATPase activity. The chain is Kinesin light chain 1 (Klc1) from Mus musculus (Mouse).